Consider the following 406-residue polypeptide: Peptidase T (406 aa).

A Zn(2+)-binding site is contributed by histidine 82. Aspartate 84 is a catalytic residue. Aspartate 142 lines the Zn(2+) pocket. Glutamate 176 (proton acceptor) is an active-site residue. Residues glutamate 177, aspartate 199, and histidine 381 each coordinate Zn(2+).

It belongs to the peptidase M20B family. The cofactor is Zn(2+).

Its subcellular location is the cytoplasm. The enzyme catalyses Release of the N-terminal residue from a tripeptide.. In terms of biological role, cleaves the N-terminal amino acid of tripeptides. The chain is Peptidase T from Streptococcus agalactiae serotype Ia (strain ATCC 27591 / A909 / CDC SS700).